Consider the following 1183-residue polypeptide: Spermatogenesis-associated protein 31G1 (1183 aa).

Disordered stretches follow at residues 109 to 153 (TPIG…FPTF), 469 to 555 (LMPA…SPWA), 661 to 686 (TVDDVPRSEATGKNTDNTKKCSSSEP), 843 to 884 (ASQG…VSEV), 973 to 1032 (CLHS…TGLL), and 1048 to 1087 (QKRGSSRKSKAEKCGRTARLGSPTNTRENNPAQACRPAEA). Positions 124–134 (CRSEGRPRATE) are enriched in basic and acidic residues. Residues 135–153 (TQEQVLIQSPSPSRSFPTF) are compositionally biased toward polar residues. The span at 487 to 509 (NPKERLSAPKDVRENLGYREHPH) shows a compositional bias: basic and acidic residues. The segment covering 671–685 (TGKNTDNTKKCSSSE) has biased composition (polar residues). Pro residues predominate over residues 847-858 (PNPPAVNPPQPT). Over residues 975 to 984 (HSSSQPQAQA) the composition is skewed to polar residues. Residues 993–1002 (QKSKRLKRKA) show a composition bias toward basic residues. The span at 1069 to 1079 (SPTNTRENNPA) shows a compositional bias: polar residues.

As to expression, expressed in kidney and testis. Expressed at lower levels in stomach, intestine, epididymis and ovary. Expressed at very low levels in heart and spleen.

Dispensable for normal development and fertility. This Mus musculus (Mouse) protein is Spermatogenesis-associated protein 31G1 (Spata31g1).